The following is a 217-amino-acid chain: MQNVEFASLIVMAVAIALLPFAAMVVTSYTKIVVVLGLLRNALGVQQVPPNMVLNGIAMIVSCFVMAPVGMEAMQRAHVQINAQGGTNITQVMPLLDAARDPFREFLNKHTNAREKAFFMRSAQQLWPPAKAAQLKDDDLIVLAPAFTLTELTSAFRIGFLLYLAFIVIDLVIANLLMALGLSQVTPSNVAIPFKLLLFVVMDGWSVLIHGLVNTYR.

The next 4 membrane-spanning stretches (helical) occupy residues 6 to 26 (FASL…AMVV), 52 to 72 (MVLN…VGME), 158 to 178 (IGFL…NLLM), and 190 to 210 (VAIP…VLIH).

The protein belongs to the FliP/MopC/SpaP family.

The protein resides in the cell membrane. Functionally, involved in the secretion of PopA, a proteinaceous elicitor of the hypersensitivity response in plants. The sequence is that of Hypersensitivity response secretion protein HrcR (hrcR) from Ralstonia nicotianae (strain ATCC BAA-1114 / GMI1000) (Ralstonia solanacearum).